The sequence spans 313 residues: Porphobilinogen deaminase (313 aa).

C242 carries the post-translational modification S-(dipyrrolylmethanemethyl)cysteine.

Belongs to the HMBS family. Monomer. The cofactor is dipyrromethane.

The enzyme catalyses 4 porphobilinogen + H2O = hydroxymethylbilane + 4 NH4(+). It functions in the pathway porphyrin-containing compound metabolism; protoporphyrin-IX biosynthesis; coproporphyrinogen-III from 5-aminolevulinate: step 2/4. In terms of biological role, tetrapolymerization of the monopyrrole PBG into the hydroxymethylbilane pre-uroporphyrinogen in several discrete steps. This is Porphobilinogen deaminase from Escherichia coli O17:K52:H18 (strain UMN026 / ExPEC).